A 93-amino-acid chain; its full sequence is MAKSKNHSTHHKNRKDHRNGIKKAVVHKKTSSKGVELGFARNQRYARIGTEIKRYVRGDMQEVKAHKNPRQPLKTIVAAAKAKLAAKKAAAKK.

Residues 1-31 (MAKSKNHSTHHKNRKDHRNGIKKAVVHKKTS) show a composition bias toward basic residues. The tract at residues 1–33 (MAKSKNHSTHHKNRKDHRNGIKKAVVHKKTSSK) is disordered.

It belongs to the eukaryotic ribosomal protein eL29 family.

This Dictyostelium discoideum (Social amoeba) protein is Large ribosomal subunit protein eL29 (rpl29).